A 327-amino-acid polypeptide reads, in one-letter code: Methionine import ATP-binding protein MetN (327 aa).

The ABC transporter domain occupies 3–239 (VELKNIEKIY…PKHAVTKELL (237 aa)). Residue 36–43 (GYSGAGKS) participates in ATP binding.

It belongs to the ABC transporter superfamily. Methionine importer (TC 3.A.1.24) family. As to quaternary structure, the complex is composed of two ATP-binding proteins (MetN), two transmembrane proteins (MetI) and a solute-binding protein (MetQ).

Its subcellular location is the cell inner membrane. The enzyme catalyses L-methionine(out) + ATP + H2O = L-methionine(in) + ADP + phosphate + H(+). It catalyses the reaction D-methionine(out) + ATP + H2O = D-methionine(in) + ADP + phosphate + H(+). In terms of biological role, part of the ABC transporter complex MetNIQ involved in methionine import. Responsible for energy coupling to the transport system. This chain is Methionine import ATP-binding protein MetN, found in Helicobacter pylori (strain HPAG1).